Reading from the N-terminus, the 534-residue chain is Cytochrome P450 monooxygenase AN1598 (534 aa).

N-linked (GlcNAc...) asparagine glycosylation occurs at asparagine 3. A helical transmembrane segment spans residues 25-45; sequence LYLEILGVLSVVYLLQTLVAY. Asparagine 95 carries an N-linked (GlcNAc...) asparagine glycan. A heme-binding site is contributed by cysteine 464. An N-linked (GlcNAc...) asparagine glycan is attached at asparagine 498.

It belongs to the cytochrome P450 family. It depends on heme as a cofactor.

Its subcellular location is the membrane. The protein operates within secondary metabolite biosynthesis; terpenoid biosynthesis. Its function is as follows. Bifunctional terpene synthase; part of the gene cluster that mediates the biosynthesis of the diterpene ent-pimara-8(14),15-diene (PD). Within the cluster, the HMG-CoA reductase AN1593 functions in the mevalonate pathway, which produces isoprenoid precursors. The geranylgeranyl pyrophosphate (GGPP) synthase AN1592 is needed in the formation of GGPP, the precursor for diterpenes. Lastly, the pimaradiene synthase pbcA performs the 2 cyclization steps that convert GGPP to ent-pimara-8(14),15-diene. The putative roles of the remaining cluster enzymes in ent-pimara-8(14),15-diene biosynthesis is unclear. The cytochrome P450 monooxygenase AN1598, the glutathione S-transferase AN1595, the oxidoreductases AN1596 and AN1597 probably function as decorative enzymes. It is possible that in biological conditions the compound is oxidized to ent-pimara-8(14),15-dien-19-oic acid, which is a bioactive diterpene compound predominant in many plant extracts. The sequence is that of Cytochrome P450 monooxygenase AN1598 from Emericella nidulans (strain FGSC A4 / ATCC 38163 / CBS 112.46 / NRRL 194 / M139) (Aspergillus nidulans).